A 271-amino-acid polypeptide reads, in one-letter code: Na(+), Li(+), K(+)/H(+) antiporter subunit B (271 aa).

7 consecutive transmembrane segments (helical) span residues Ile-2–Phe-22, Leu-36–Gly-56, Trp-94–Ile-114, Pro-130–Trp-150, Ile-152–Gln-172, Ser-193–Gly-213, and Ala-216–Met-236. The segment at Thr-252–Leu-271 is disordered.

Belongs to the UmpA/UmpB family. Heterodimer composed of UmpA and UmpB.

Its subcellular location is the cell membrane. Functionally, part of a two-component antiporter that catalyzes the efflux of Na(+), Li(+) and K(+) in exchange for external protons. Shows a preference for Na(+), followed by K(+) and Li(+). The polypeptide is Na(+), Li(+), K(+)/H(+) antiporter subunit B (Vreelandella zhaodongensis (Halomonas zhaodongensis)).